Reading from the N-terminus, the 613-residue chain is Glucose-6-phosphate isomerase 1, chloroplastic (613 aa).

Positions 1 to 14 (MASLSGLYSSSPSL) are enriched in low complexity. The segment at 1-21 (MASLSGLYSSSPSLKPAKNHS) is disordered. A chloroplast-targeting transit peptide spans 1-48 (MASLSGLYSSSPSLKPAKNHSFKALPAQSRDSFSFPHTSKPTNLPLTL). E392 functions as the Proton donor in the catalytic mechanism. Active-site residues include H421 and K526. Phosphoserine is present on S595.

Belongs to the GPI family.

It localises to the plastid. It is found in the chloroplast stroma. It carries out the reaction alpha-D-glucose 6-phosphate = beta-D-fructose 6-phosphate. It functions in the pathway carbohydrate degradation; glycolysis; D-glyceraldehyde 3-phosphate and glycerone phosphate from D-glucose: step 2/4. Its pathway is carbohydrate biosynthesis; gluconeogenesis. With respect to regulation, inhibited by glycerol-3-P (G3P). Promotes the synthesis of starch in leaves. In Arabidopsis thaliana (Mouse-ear cress), this protein is Glucose-6-phosphate isomerase 1, chloroplastic (PGI1).